Here is a 362-residue protein sequence, read N- to C-terminus: 5-amino-6-(D-ribitylamino)uracil--L-tyrosine 4-hydroxyphenyl transferase (362 aa).

A Radical SAM core domain is found at 48 to 294 (ITYVVNRNIN…GDTIKNIQVS (247 aa)). Residues Cys62, Cys66, and Cys69 each contribute to the [4Fe-4S] cluster site.

It belongs to the radical SAM superfamily. CofH family. As to quaternary structure, consists of two subunits, CofG and CofH. Requires [4Fe-4S] cluster as cofactor.

It carries out the reaction 5-amino-6-(D-ribitylamino)uracil + L-tyrosine + S-adenosyl-L-methionine = 5-amino-5-(4-hydroxybenzyl)-6-(D-ribitylimino)-5,6-dihydrouracil + 2-iminoacetate + 5'-deoxyadenosine + L-methionine + H(+). It functions in the pathway cofactor biosynthesis; coenzyme F0 biosynthesis. In terms of biological role, catalyzes the radical-mediated synthesis of 5-amino-5-(4-hydroxybenzyl)-6-(D-ribitylimino)-5,6-dihydrouracil from 5-amino-6-(D-ribitylamino)uracil and L-tyrosine. This Methanococcus aeolicus (strain ATCC BAA-1280 / DSM 17508 / OCM 812 / Nankai-3) protein is 5-amino-6-(D-ribitylamino)uracil--L-tyrosine 4-hydroxyphenyl transferase.